The primary structure comprises 453 residues: O-methyltransferase bik3 (453 aa).

A disordered region spans residues 1–25 (MVSNGISNGTNGTNGTTTNGTNGVN). Residues 8-25 (NGTNGTNGTTTNGTNGVN) are compositionally biased toward low complexity. Position 305 (aspartate 305) interacts with S-adenosyl-L-methionine. Histidine 355 serves as the catalytic Proton acceptor.

Belongs to the class I-like SAM-binding methyltransferase superfamily. Cation-independent O-methyltransferase family. COMT subfamily.

It participates in secondary metabolite biosynthesis. Functionally, O-methyltransferase; part of the gene cluster that mediates the biosynthesis of bikaverin, a red pigment also considered as a mycotoxin. The first stage is catalyzed by the polyketide synthase bik1, which catalyzes the formation of the intermediate SMA76a also knowm as pre-bikaverin. FAD-dependent monooxygenase bik2 might then be responsible for the oxidation of pre-bikaverin to oxo-pre-bikaverin which is in turn methylated by the O-methyltransferase bik3 to me-oxo-pre-bikaverin. A further cycle of oxydation and methylation by bik2 and bik3 leads to the final product of bikaverin, via a nor-bikaverin intermediate. This is O-methyltransferase bik3 from Gibberella fujikuroi (strain CBS 195.34 / IMI 58289 / NRRL A-6831) (Bakanae and foot rot disease fungus).